We begin with the raw amino-acid sequence, 261 residues long: Phosphatidylglycerol--prolipoprotein diacylglyceryl transferase (261 aa).

7 helical membrane-spanning segments follow: residues valine 19–tyrosine 39, leucine 56–tyrosine 76, tryptophan 92–phenylalanine 112, phenylalanine 126–glycine 146, glutamine 173–alanine 193, phenylalanine 199–phenylalanine 219, and glycine 227–isoleucine 247. Arginine 139 is a binding site for a 1,2-diacyl-sn-glycero-3-phospho-(1'-sn-glycerol).

Belongs to the Lgt family.

Its subcellular location is the cell inner membrane. It catalyses the reaction L-cysteinyl-[prolipoprotein] + a 1,2-diacyl-sn-glycero-3-phospho-(1'-sn-glycerol) = an S-1,2-diacyl-sn-glyceryl-L-cysteinyl-[prolipoprotein] + sn-glycerol 1-phosphate + H(+). It functions in the pathway protein modification; lipoprotein biosynthesis (diacylglyceryl transfer). Its function is as follows. Catalyzes the transfer of the diacylglyceryl group from phosphatidylglycerol to the sulfhydryl group of the N-terminal cysteine of a prolipoprotein, the first step in the formation of mature lipoproteins. This Coxiella burnetii (strain CbuK_Q154) (Coxiella burnetii (strain Q154)) protein is Phosphatidylglycerol--prolipoprotein diacylglyceryl transferase.